The following is a 322-amino-acid chain: Myeloid-associated differentiation marker (322 aa).

A disordered region spans residues 1–25 (MPVTVTRTTITTTTTSSSGQGSPTI). Ser-22 is subject to Phosphoserine. MARVEL domains lie at 31–163 (ALTQ…ARPG) and 168–319 (YMAT…HLVF). Transmembrane regions (helical) follow at residues 41–61 (LLQL…GAWT), 70–90 (FTWC…LCGL), 101–121 (FPIT…IIYP), 137–157 (AIAA…EVAW), 171–191 (TVPG…FAFI), 203–223 (LEWC…AILL), 239–259 (FLSG…VLWP), and 294–314 (LAVA…LVHS).

It belongs to the MAL family.

Its subcellular location is the membrane. The sequence is that of Myeloid-associated differentiation marker (MYADM) from Pongo abelii (Sumatran orangutan).